The chain runs to 326 residues: Transcription cofactor vestigial-like protein 3 (326 aa).

A disordered region spans residues 57-80 (VTLPSKQEEEDEEEEEEEKDQPAE). Residue lysine 62 forms a Glycyl lysine isopeptide (Lys-Gly) (interchain with G-Cter in SUMO2) linkage. Positions 64–75 (EEEDEEEEEEEK) are enriched in acidic residues. A Glycyl lysine isopeptide (Lys-Gly) (interchain with G-Cter in SUMO2) cross-link involves residue lysine 126. Disordered stretches follow at residues 175–203 (PPGT…PPAV) and 233–256 (HAHM…SALD). Residues 233–249 (HAHMHHRHRHHHHHHHP) show a composition bias toward basic residues.

The protein belongs to the vestigial family. Enriched in placenta.

Its subcellular location is the nucleus. Its function is as follows. May act as a specific coactivator for the mammalian TEFs. This chain is Transcription cofactor vestigial-like protein 3 (VGLL3), found in Homo sapiens (Human).